We begin with the raw amino-acid sequence, 131 residues long: Large ribosomal subunit protein bL17 (131 aa).

Belongs to the bacterial ribosomal protein bL17 family. As to quaternary structure, part of the 50S ribosomal subunit. Contacts protein L32.

The protein is Large ribosomal subunit protein bL17 of Oenococcus oeni (strain ATCC BAA-331 / PSU-1).